The following is a 224-amino-acid chain: Cytidylate kinase (224 aa).

ATP is bound at residue 9 to 17; that stretch reads GPSGVGKGT.

The protein belongs to the cytidylate kinase family. Type 1 subfamily.

It is found in the cytoplasm. The catalysed reaction is CMP + ATP = CDP + ADP. It catalyses the reaction dCMP + ATP = dCDP + ADP. In Dichelobacter nodosus (strain VCS1703A), this protein is Cytidylate kinase.